Reading from the N-terminus, the 183-residue chain is Ribosome maturation factor RimM (183 aa).

In terms of domain architecture, PRC barrel spans 102-183 (DDDFYWHQLE…CITVDWDPEF (82 aa)).

Belongs to the RimM family. In terms of assembly, binds ribosomal protein uS19.

It is found in the cytoplasm. Functionally, an accessory protein needed during the final step in the assembly of 30S ribosomal subunit, possibly for assembly of the head region. Essential for efficient processing of 16S rRNA. May be needed both before and after RbfA during the maturation of 16S rRNA. It has affinity for free ribosomal 30S subunits but not for 70S ribosomes. The chain is Ribosome maturation factor RimM from Saccharophagus degradans (strain 2-40 / ATCC 43961 / DSM 17024).